We begin with the raw amino-acid sequence, 402 residues long: MAKRSLASLNAGDLSGKRVLVRVDFNVPLNEAGAITDDTRIRAALPTINDLIGKGAKVILSAHFGRPKGQVNDAMRLTPVAARLSELLGKPVAKTDSCIGPDAEAKVNAMADGDVVLLENVRFFAEEEKNDAGFAEKLAGLAEVYVNDAFGAAHRAHASTEGVTKFLKPAVAGFLMEKELQYLQGAVDEPKRPLAAIVGGSKVSSKIGVLEALIDKCDKVLIGGGMIFTFYKARGLSVGKSLVEEDKLELAKELEAKAKAKGVELLLPTDVVLADNFAPDANSQVADVTAIPDGWMGLDIGPDAVKVFQDALGDCQTVIWNGPMGVFEFEKFATGTNAIATTLAELSGKGCCTIIGGGDSVAAVEKAGLADKMSHISTGGGASLELLEGKVLPGVAALNDAA.

Residues 24 to 26, Arg-40, 63 to 66, Arg-122, and Arg-155 contribute to the substrate site; these read DFN and HFGR. ATP-binding positions include Lys-206, Gly-297, Glu-328, and 357–360; that span reads GGDS.

Belongs to the phosphoglycerate kinase family. Monomer.

The protein localises to the cytoplasm. The catalysed reaction is (2R)-3-phosphoglycerate + ATP = (2R)-3-phospho-glyceroyl phosphate + ADP. Its pathway is carbohydrate degradation; glycolysis; pyruvate from D-glyceraldehyde 3-phosphate: step 2/5. This is Phosphoglycerate kinase from Parasynechococcus marenigrum (strain WH8102).